Here is a 317-residue protein sequence, read N- to C-terminus: Transaldolase (317 aa).

The active-site Schiff-base intermediate with substrate is the Lys-132.

Belongs to the transaldolase family. Type 1 subfamily. As to quaternary structure, homodimer.

It is found in the cytoplasm. The catalysed reaction is D-sedoheptulose 7-phosphate + D-glyceraldehyde 3-phosphate = D-erythrose 4-phosphate + beta-D-fructose 6-phosphate. Its pathway is carbohydrate degradation; pentose phosphate pathway; D-glyceraldehyde 3-phosphate and beta-D-fructose 6-phosphate from D-ribose 5-phosphate and D-xylulose 5-phosphate (non-oxidative stage): step 2/3. Functionally, transaldolase is important for the balance of metabolites in the pentose-phosphate pathway. This Haemophilus influenzae (strain PittGG) protein is Transaldolase.